Reading from the N-terminus, the 76-residue chain is Large ribosomal subunit protein uL24 (76 aa).

This sequence belongs to the universal ribosomal protein uL24 family. Part of the 50S ribosomal subunit.

In terms of biological role, one of two assembly initiator proteins, it binds directly to the 5'-end of the 23S rRNA, where it nucleates assembly of the 50S subunit. One of the proteins that surrounds the polypeptide exit tunnel on the outside of the subunit. This Sulfurimonas denitrificans (strain ATCC 33889 / DSM 1251) (Thiomicrospira denitrificans (strain ATCC 33889 / DSM 1251)) protein is Large ribosomal subunit protein uL24.